The chain runs to 342 residues: MQNEYSQFEQRKRDHIELALMPANQSSELNPFDHFSLVHEALPDLDFKDISIQSIRFKKPVEKPFIISSMTAGHSNALEINYRLMEACSKTKWAMGVGSQRRELTDKQAAFEWTPLRRDFPMVSLFSNLGIAQLIDTPISAIQRLIDTLQAEALIIHCNPLQECIQPEGTTNFQGCWTALEALVKKIASPVIIKETGCGFSKNTLLRLNNIGVAAVEISGVGGTHWGRIEGHRANKDPIRQRTADTFRNWGIDTLQSTRNAISLNPSFEIWGSGGVRNGLDAAKLFALGATTVGFAKPMLEAALGSTGQVLTQMNTIEYELKTAMFCTGSRVLDDLKEKACP.

Residue Arg-11 to Lys-12 participates in substrate binding. Residues Ser-68, Ser-69–Thr-71, Ser-99, and Asn-128 contribute to the FMN site. Substrate is bound at residue Ser-99 to Arg-101. Gln-162 serves as a coordination point for substrate. Glu-163 lines the Mg(2+) pocket. FMN is bound by residues Lys-194, Ser-219, Thr-224, Gly-275 to Arg-277, and Ala-296 to Lys-297.

This sequence belongs to the IPP isomerase type 2 family. In terms of assembly, homooctamer. Dimer of tetramers. Requires FMN as cofactor. It depends on NADPH as a cofactor. Mg(2+) serves as cofactor.

The protein resides in the cytoplasm. The enzyme catalyses isopentenyl diphosphate = dimethylallyl diphosphate. Functionally, involved in the biosynthesis of isoprenoids. Catalyzes the 1,3-allylic rearrangement of the homoallylic substrate isopentenyl (IPP) to its allylic isomer, dimethylallyl diphosphate (DMAPP). This chain is Isopentenyl-diphosphate delta-isomerase, found in Legionella pneumophila subsp. pneumophila (strain Philadelphia 1 / ATCC 33152 / DSM 7513).